The chain runs to 570 residues: Guanine nucleotide-binding protein alpha-3 subunit (570 aa).

In terms of domain architecture, PH spans 10–113 (RETLRAYLSK…WIEAIKHAIE (104 aa)). A G-alpha domain is found at 144-570 (PVLKLLLLGT…IISKTLEFYC (427 aa)). Residues 147–160 (KLLLLGTGESGKST) form a G1 motif region. 152–159 (GTGESGKS) contacts GTP. Ser159 is a Mg(2+) binding site. 2 stretches are compositionally biased toward low complexity: residues 254 to 272 (NNNS…SSSS) and 290 to 316 (NSNS…RSNS). Residues 254–321 (NNNSNSSSLK…NRSNSDGSSN (68 aa)) are disordered. Residues 386-394 (DILKSRATT) form a G2 motif region. GTP contacts are provided by residues 388–394 (LKSRATT), 414–418 (DVAGQ), 483–486 (NKID), and Ala544. Mg(2+) is bound at residue Thr394. The interval 410-419 (FRIVDVAGQR) is G3 motif. The tract at residues 479–486 (ILFLNKID) is G4 motif. Residues 542 to 547 (TCATDT) form a G5 motif region.

The protein belongs to the G-alpha family. G proteins are composed of 3 units; alpha, beta and gamma. The alpha chain contains the guanine nucleotide binding site.

Functionally, guanine nucleotide-binding proteins (G proteins) are involved as modulators or transducers in various transmembrane signaling systems. G alpha-3 plays a role in development. G alpha-3 mutants fail to aggregate. The chain is Guanine nucleotide-binding protein alpha-3 subunit (gpaC) from Dictyostelium discoideum (Social amoeba).